The primary structure comprises 551 residues: Structure-specific endonuclease subunit MUS81 (551 aa).

Basic and acidic residues predominate over residues 84-93 (HRTSGGDHAP). The tract at residues 84–130 (HRTSGGDHAPDSPSGENSPAPQGRLAEVQDSSMPVPAQPKAGGSGSY) is disordered. 2 positions are modified to phosphoserine: Ser95 and Ser101. The segment at 125 to 244 (GGSGSYWPAR…PGEETAVPGA (120 aa)) is interaction with BLM. The interval 131 to 230 (WPARHSGARV…GLSLLNVGIG (100 aa)) is winged helix domain (WHD); critical for endonuclease activity. The 103-residue stretch at 270–372 (LLCVDIGETR…RRVYLVEEHG (103 aa)) folds into the ERCC4 domain. Catalysis depends on residues Asp274, Glu277, and Asp307. Mg(2+) contacts are provided by Asp274, Glu277, Asp307, Glu333, and Arg334. The tract at residues 471-545 (VREVFARQLM…LSRTLSQLYC (75 aa)) is helix-hairpin-helix (2HhH); involved in DNA recognition and bending.

It belongs to the XPF family. Part of the heterodimeric DNA structure-specific endonuclease complex MUS81-EME1. Part of the heterodimeric DNA structure-specific endonuclease complex MUS81-EME2. Interacts with BLM; may stimulate the endonuclease activity of MUS81. Interacts with SLX4/BTBD12; this interaction is direct and links the MUS81-EME1 complex to SLX4, which may coordinate the action of the structure-specific endonuclease during DNA repair. Interacts with DCLRE1B/Apollo. Interacts with RECQL5; this interaction stimulates mitotic DNA synthesis. Interacts with CHEK2. The cofactor is Mg(2+). In terms of tissue distribution, widely expressed.

It is found in the nucleus. The protein localises to the nucleolus. Functionally, catalytic subunit of two functionally distinct, structure-specific, heterodimeric DNA endonucleases MUS81-EME1 and MUS81-EME2 that are involved in the maintenance of genome stability. Both endonucleases have essentially the same substrate specificity though MUS81-EME2 is more active than its MUS81-EME1 counterpart. Both cleave 3'-flaps and nicked Holliday junctions, and exhibit limited endonuclease activity with 5' flaps and nicked double-stranded DNAs. MUS81-EME2 which is active during the replication of DNA is more specifically involved in replication fork processing. Replication forks frequently encounter obstacles to their passage, including DNA base lesions, DNA interstrand cross-links, difficult-to-replicate sequences, transcription bubbles, or tightly bound proteins. One mechanism for the restart of a stalled replication fork involves nucleolytic cleavage mediated by the MUS81-EME2 endonuclease. By acting upon the stalled fork, MUS81-EME2 generates a DNA double-strand break (DSB) that can be repaired by homologous recombination, leading to the restoration of an active fork. MUS81-EME2 could also function in telomere maintenance. MUS81-EME1, on the other hand, is active later in the cell cycle and functions in the resolution of mitotic recombination intermediates including the Holliday junctions, the four-way DNA intermediates that form during homologous recombination. This Homo sapiens (Human) protein is Structure-specific endonuclease subunit MUS81.